We begin with the raw amino-acid sequence, 367 residues long: tRNA-specific 2-thiouridylase MnmA (367 aa).

ATP is bound by residues 14–21 (AMSGGVDS) and leucine 40. The active-site Nucleophile is the cysteine 108. Residues cysteine 108 and cysteine 204 are joined by a disulfide bond. Glycine 132 contributes to the ATP binding site. The interval 154-156 (KDQ) is interaction with tRNA. Residue cysteine 204 is the Cysteine persulfide intermediate of the active site.

It belongs to the MnmA/TRMU family.

It localises to the cytoplasm. The enzyme catalyses S-sulfanyl-L-cysteinyl-[protein] + uridine(34) in tRNA + AH2 + ATP = 2-thiouridine(34) in tRNA + L-cysteinyl-[protein] + A + AMP + diphosphate + H(+). Catalyzes the 2-thiolation of uridine at the wobble position (U34) of tRNA, leading to the formation of s(2)U34. The chain is tRNA-specific 2-thiouridylase MnmA from Rickettsia bellii (strain OSU 85-389).